A 501-amino-acid chain; its full sequence is MLPPKIFFEKVKEIIWPIERKELKLFIPMALMMLCILFNFGALRSIKDSLVVPSMGAEIISFLKLWLVLPSCVIFTILYVKLSNKLNFEYIFYSIVGTFLLFFLLFAYIIYPNQDIYHPNDAMINNLIASYPNLKWFIKIGSKWSYALMYIFSELWSAVVINLMFWQFANHIFDTAKAKRFYPVLGMVGNIGLIIAGSVLVFFSSGQYIIDSELLTDSYNSSSNNSIMLQPIISIIVTAGIIAMFLFRIINKFILTNSINVLDVKKVAAKTKTKLALIESIKLIIHSKYIGRIALLIICYGLLINIVEGPWKAKIKELHPNTVDYVNFMGMFNIWMGISCVTFMIIGSNILRRLGWLISALLTPIMLSITGFMFFIFIIFIEEIGTCFGDFNLLYVAIIVGAIQNILSKSSKYSLFDSTKEMAYIPLSLELRTKGKAAVEVIGTKFGKSLGAFIQSLIFIIIPTATFDSIIIYLLVIFIVMMNLWIWNIIKLNKEYIKLCQ.

The next 12 helical transmembrane spans lie at 23 to 43 (LKLFIPMALMMLCILFNFGAL), 59 to 79 (IISFLKLWLVLPSCVIFTILY), 90 to 110 (YIFYSIVGTFLLFFLLFAYII), 146 to 166 (YALMYIFSELWSAVVINLMFW), 183 to 203 (PVLGMVGNIGLIIAGSVLVFF), 227 to 247 (IMLQPIISIIVTAGIIAMFLF), 293 to 313 (IALLIICYGLLINIVEGPWKA), 326 to 346 (VNFMGMFNIWMGISCVTFMII), 361 to 381 (LLTPIMLSITGFMFFIFIIFI), 383 to 403 (EIGTCFGDFNLLYVAIIVGAI), 446 to 466 (FGKSLGAFIQSLIFIIIPTAT), and 470 to 490 (IIIYLLVIFIVMMNLWIWNII).

Belongs to the ADP/ATP translocase tlc family.

It is found in the cell membrane. Its function is as follows. Provides the rickettsial cell with host ATP in exchange for rickettsial ADP. This is an obligate exchange system. This energy acquiring activity is an important component of rickettsial parasitism. This Rickettsia prowazekii (strain Madrid E) protein is ADP,ATP carrier protein 3 (tlcC).